A 190-amino-acid chain; its full sequence is Thiamine biosynthesis protein X (190 aa).

The N-terminal stretch at Met-1 to Ala-22 is a signal peptide. A lipid anchor (N-palmitoyl cysteine) is attached at Cys-23. The S-diacylglycerol cysteine moiety is linked to residue Cys-23. Positions Ser-43 to Asp-68 are disordered. A compositionally biased stretch (low complexity) spans Thr-47–Ala-63.

The protein localises to the cell membrane. Is necessary for biosynthesis of the 4-methyl-5-(beta-hydroxyethyl)thiazol component from which thiamine is formed. This is Thiamine biosynthesis protein X (thiX) from Corynebacterium glutamicum (strain ATCC 13032 / DSM 20300 / JCM 1318 / BCRC 11384 / CCUG 27702 / LMG 3730 / NBRC 12168 / NCIMB 10025 / NRRL B-2784 / 534).